Consider the following 316-residue polypeptide: Bifunctional peptidase and (3S)-lysyl hydroxylase JMJD7 (316 aa).

One can recognise a JmjC domain in the interval 128-307; it reads VQKQCSNLPS…LKYSYFQLLD (180 aa). The Fe cation site is built by His-178, Asp-180, and His-277.

Homodimer; disulfide-linked. Interacts with DRG1 and DRG2. Fe(2+) is required as a cofactor.

It localises to the nucleus. The protein resides in the cytoplasm. The enzyme catalyses L-lysyl-[protein] + 2-oxoglutarate + O2 = (3S)-3-hydroxy-L-lysyl-[protein] + succinate + CO2. Its function is as follows. Bifunctional enzyme that acts both as an endopeptidase and 2-oxoglutarate-dependent monooxygenase. Endopeptidase that cleaves histones N-terminal tails at the carboxyl side of methylated arginine or lysine residues, to generate 'tailless nucleosomes', which may trigger transcription elongation. Preferentially recognizes and cleaves monomethylated and dimethylated arginine residues of histones H2, H3 and H4. After initial cleavage, continues to digest histones tails via its aminopeptidase activity. Additionally, may play a role in protein biosynthesis by modifying the translation machinery. Acts as a Fe(2+) and 2-oxoglutarate-dependent monooxygenase, catalyzing (S)-stereospecific hydroxylation at C-3 of 'Lys-22' of DRG1 and 'Lys-21' of DRG2 translation factors (TRAFAC), promoting their interaction with ribonucleic acids (RNA). In Homo sapiens (Human), this protein is Bifunctional peptidase and (3S)-lysyl hydroxylase JMJD7.